We begin with the raw amino-acid sequence, 510 residues long: Arginine biosynthesis bifunctional protein ArgJ, chloroplastic (510 aa).

5 residues coordinate substrate: Thr223, Lys249, Glu359, Asn505, and Thr510.

Belongs to the ArgJ family. Heterodimer of an alpha and a beta chain.

The protein resides in the plastid. It is found in the chloroplast. The catalysed reaction is N(2)-acetyl-L-ornithine + L-glutamate = N-acetyl-L-glutamate + L-ornithine. It catalyses the reaction L-glutamate + acetyl-CoA = N-acetyl-L-glutamate + CoA + H(+). Its pathway is amino-acid biosynthesis; L-arginine biosynthesis; L-ornithine and N-acetyl-L-glutamate from L-glutamate and N(2)-acetyl-L-ornithine (cyclic): step 1/1. It functions in the pathway amino-acid biosynthesis; L-arginine biosynthesis; N(2)-acetyl-L-ornithine from L-glutamate: step 1/4. Functionally, catalyzes two activities which are involved in the cyclic version of arginine biosynthesis: the synthesis of acetylglutamate from glutamate and acetyl-CoA, and of ornithine by transacetylation between acetylornithine and glutamate. The protein is Arginine biosynthesis bifunctional protein ArgJ, chloroplastic of Vitis vinifera (Grape).